A 347-amino-acid polypeptide reads, in one-letter code: Druantia protein DruD (347 aa).

The protein localises to the cytoplasm. Its function is as follows. Component of antiviral defense system Druantia type I, composed of DruA, DruB, DruC, DruD and DruE. Expression of Druantia in E.coli (strain MG1655) confers resistance to phage lambda, SECphi18, SECphi27 and T4. The chain is Druantia protein DruD from Escherichia coli (strain UMEA 4076-1).